The chain runs to 398 residues: Calreticulin (398 aa).

The N-terminal stretch at 1–19 is a signal peptide; sequence MKAVVLVVVSLLALSSINC. Positions 20–197 are N-domain; that stretch reads DVFFEEKFPD…NEKVESGDLE (178 aa). An intrachain disulfide couples cysteine 105 to cysteine 137. An alpha-D-glucoside contacts are provided by tyrosine 109, lysine 111, tyrosine 128, and aspartate 135. 7 consecutive repeat copies span residues 191–202, 210–221, 227–238, 244–255, 259–269, 273–283, and 287–297. A 4 X approximate repeats region spans residues 191 to 255; that stretch reads VESGDLEADW…DATKPEDWDD (65 aa). The segment at 198–308 is P-domain; the sequence is ADWDFLPNKK…YTPDSNLYKR (111 aa). Over residues 207-251 the composition is skewed to basic and acidic residues; sequence KIKDPEAKKPEDWDDKPTIPDPEDKKPEDWDKPEHIPDPDATKPE. Residues 207-257 are disordered; it reads KIKDPEAKKPEDWDDKPTIPDPEDKKPEDWDKPEHIPDPDATKPEDWDDEM. The segment at 259 to 297 is 3 X approximate repeats; it reads GEWEPPMIDNPDYKGVWAPKQIDNPAYKGPWVHPEIDNP. Positions 309–398 are C-domain; that stretch reads DEICAVGLDL…AAPVEEHDEL (90 aa). Aspartate 317 contacts an alpha-D-glucoside. Positions 334–398 are disordered; sequence DDPAAAKERG…AAPVEEHDEL (65 aa). Residues 337 to 372 show a composition bias toward basic and acidic residues; sequence AAAKERGEVIKKRQEGEKKMKSEQDEAEREKEKAEK. Acidic residues predominate over residues 373 to 387; the sequence is PDDEEDDEDLDDETG. Residues 395-398 carry the Prevents secretion from ER motif; sequence HDEL.

This sequence belongs to the calreticulin family. Monomer. In terms of tissue distribution, expressed in fat bodies. Not expressed in midgut, silk gland, ovary or testis.

The protein localises to the endoplasmic reticulum lumen. Molecular calcium-binding chaperone promoting folding, oligomeric assembly and quality control in the ER via the calreticulin/calnexin cycle. This lectin may interact transiently with almost all of the monoglucosylated glycoproteins that are synthesized in the ER. The protein is Calreticulin of Bombyx mori (Silk moth).